The following is a 250-amino-acid chain: 3-deoxy-manno-octulosonate cytidylyltransferase (250 aa).

It belongs to the KdsB family.

The protein resides in the cytoplasm. It catalyses the reaction 3-deoxy-alpha-D-manno-oct-2-ulosonate + CTP = CMP-3-deoxy-beta-D-manno-octulosonate + diphosphate. Its pathway is nucleotide-sugar biosynthesis; CMP-3-deoxy-D-manno-octulosonate biosynthesis; CMP-3-deoxy-D-manno-octulosonate from 3-deoxy-D-manno-octulosonate and CTP: step 1/1. The protein operates within bacterial outer membrane biogenesis; lipopolysaccharide biosynthesis. In terms of biological role, activates KDO (a required 8-carbon sugar) for incorporation into bacterial lipopolysaccharide in Gram-negative bacteria. The sequence is that of 3-deoxy-manno-octulosonate cytidylyltransferase from Yersinia enterocolitica serotype O:8 / biotype 1B (strain NCTC 13174 / 8081).